The sequence spans 244 residues: Large ribosomal subunit protein uL2 (244 aa).

Residues 1 to 12 are compositionally biased toward basic residues; it reads MGKRILVQRRGR. Disordered regions lie at residues 1-26 and 193-225; these read MGKRILVQRRGRGGSQFRSPSWKRDG and AMSPYAHPHGGGSHQKGGTPVPKTAPPGQKVGF.

Belongs to the universal ribosomal protein uL2 family. In terms of assembly, part of the 50S ribosomal subunit. Forms a bridge to the 30S subunit in the 70S ribosome.

One of the primary rRNA binding proteins. Required for association of the 30S and 50S subunits to form the 70S ribosome, for tRNA binding and peptide bond formation. It has been suggested to have peptidyltransferase activity; this is somewhat controversial. Makes several contacts with the 16S rRNA in the 70S ribosome. This chain is Large ribosomal subunit protein uL2, found in Pyrobaculum calidifontis (strain DSM 21063 / JCM 11548 / VA1).